Reading from the N-terminus, the 78-residue chain is MEGDIAEMGKFIGAGLATIGLGGAGIGVGHVAGNFLAGALRNPSAAPGQMANLFVGIAFAEALGIFSFLIALLLMFAV.

2 consecutive transmembrane segments (helical) span residues 11 to 31 (FIGAGLATIGLGGAGIGVGHV) and 53 to 73 (LFVGIAFAEALGIFSFLIALL).

It belongs to the ATPase C chain family. F-type ATPases have 2 components, F(1) - the catalytic core - and F(0) - the membrane proton channel. F(1) has five subunits: alpha(3), beta(3), gamma(1), delta(1), epsilon(1). F(0) has four main subunits: a(1), b(1), b'(1) and c(10-14). The alpha and beta chains form an alternating ring which encloses part of the gamma chain. F(1) is attached to F(0) by a central stalk formed by the gamma and epsilon chains, while a peripheral stalk is formed by the delta, b and b' chains.

The protein localises to the cell inner membrane. F(1)F(0) ATP synthase produces ATP from ADP in the presence of a proton or sodium gradient. F-type ATPases consist of two structural domains, F(1) containing the extramembraneous catalytic core and F(0) containing the membrane proton channel, linked together by a central stalk and a peripheral stalk. During catalysis, ATP synthesis in the catalytic domain of F(1) is coupled via a rotary mechanism of the central stalk subunits to proton translocation. Functionally, key component of the F(0) channel; it plays a direct role in translocation across the membrane. A homomeric c-ring of between 10-14 subunits forms the central stalk rotor element with the F(1) delta and epsilon subunits. This is ATP synthase subunit c from Cereibacter sphaeroides (strain ATCC 17025 / ATH 2.4.3) (Rhodobacter sphaeroides).